Here is a 286-residue protein sequence, read N- to C-terminus: Polyamine aminopropyltransferase (286 aa).

The region spanning 5–238 is the PABS domain; that stretch reads TMWHETLHDQ…GIMTFAWATD (234 aa). Position 33 (Gln-33) interacts with S-methyl-5'-thioadenosine. Spermidine contacts are provided by His-64 and Asp-88. Residues Glu-108 and 140 to 141 contribute to the S-methyl-5'-thioadenosine site; that span reads DG. The Proton acceptor role is filled by Asp-158. 158–161 lines the spermidine pocket; that stretch reads DCTD. Pro-165 serves as a coordination point for S-methyl-5'-thioadenosine.

The protein belongs to the spermidine/spermine synthase family. In terms of assembly, homodimer or homotetramer.

It is found in the cytoplasm. The enzyme catalyses S-adenosyl 3-(methylsulfanyl)propylamine + putrescine = S-methyl-5'-thioadenosine + spermidine + H(+). The protein operates within amine and polyamine biosynthesis; spermidine biosynthesis; spermidine from putrescine: step 1/1. Its function is as follows. Catalyzes the irreversible transfer of a propylamine group from the amino donor S-adenosylmethioninamine (decarboxy-AdoMet) to putrescine (1,4-diaminobutane) to yield spermidine. The protein is Polyamine aminopropyltransferase of Salmonella enteritidis PT4 (strain P125109).